The primary structure comprises 207 residues: ATP-dependent Clp protease proteolytic subunit (207 aa).

The active-site Nucleophile is the S111. H136 is a catalytic residue.

The protein belongs to the peptidase S14 family. In terms of assembly, fourteen ClpP subunits assemble into 2 heptameric rings which stack back to back to give a disk-like structure with a central cavity, resembling the structure of eukaryotic proteasomes.

The protein localises to the cytoplasm. It catalyses the reaction Hydrolysis of proteins to small peptides in the presence of ATP and magnesium. alpha-casein is the usual test substrate. In the absence of ATP, only oligopeptides shorter than five residues are hydrolyzed (such as succinyl-Leu-Tyr-|-NHMec, and Leu-Tyr-Leu-|-Tyr-Trp, in which cleavage of the -Tyr-|-Leu- and -Tyr-|-Trp bonds also occurs).. Cleaves peptides in various proteins in a process that requires ATP hydrolysis. Has a chymotrypsin-like activity. Plays a major role in the degradation of misfolded proteins. This Photorhabdus laumondii subsp. laumondii (strain DSM 15139 / CIP 105565 / TT01) (Photorhabdus luminescens subsp. laumondii) protein is ATP-dependent Clp protease proteolytic subunit.